The sequence spans 174 residues: MSTSTRRVVRFRLSFASQPSPVCVFFGLNSQLLWQAAPCHVSFHLICASNNELRTKSRPRLLQDEKRAVWRRLRQFCPVVFPRIAQSMNALALRGATREGSALAFFGQLAKYLNRIGKRAEKSKPSDWEKYDVKYPNKPHSVRSVTLNAGFRRSGNHSAGNVHPASPMIKVQGG.

The interval 153-174 (RSGNHSAGNVHPASPMIKVQGG) is disordered.

This is an uncharacterized protein from Sinorhizobium fredii (strain NBRC 101917 / NGR234).